The following is a 291-amino-acid chain: Phosphoribulokinase (291 aa).

Position 12–20 (G12–S20) interacts with ATP.

This sequence belongs to the phosphoribulokinase family. Homooctamer.

It catalyses the reaction D-ribulose 5-phosphate + ATP = D-ribulose 1,5-bisphosphate + ADP + H(+). Its pathway is carbohydrate biosynthesis; Calvin cycle. This chain is Phosphoribulokinase (cbbP), found in Xanthobacter flavus.